We begin with the raw amino-acid sequence, 1177 residues long: DNA-directed RNA polymerase subunit beta (1177 aa).

Residues 1147-1161 (DDTEIEMRDTEDDDD) show a composition bias toward acidic residues. Residues 1147–1177 (DDTEIEMRDTEDDDDHQSADKLNVEVETTKE) form a disordered region. Basic and acidic residues predominate over residues 1162 to 1177 (HQSADKLNVEVETTKE).

Belongs to the RNA polymerase beta chain family. The RNAP catalytic core consists of 2 alpha, 1 beta, 1 beta' and 1 omega subunit. When a sigma factor is associated with the core the holoenzyme is formed, which can initiate transcription.

It carries out the reaction RNA(n) + a ribonucleoside 5'-triphosphate = RNA(n+1) + diphosphate. In terms of biological role, DNA-dependent RNA polymerase catalyzes the transcription of DNA into RNA using the four ribonucleoside triphosphates as substrates. This is DNA-directed RNA polymerase subunit beta from Bacillus thuringiensis (strain Al Hakam).